The following is a 228-amino-acid chain: Leucokinins (228 aa).

Residues M1–G18 form the signal peptide. Residues W19–Q164 constitute a propeptide that is removed on maturation. The segment at E80–N118 is disordered. 2 positions are modified to glycine amide: G180 and G193. Residues N197–I209 constitute a propeptide that is removed on maturation. At G217 the chain carries Glycine amide. The propeptide occupies N221–F228.

The protein localises to the secreted. Stimulates both fluid secretion by the Malpighian tubules and hindgut contractions. Depolarize the transepithelial voltage of the Malpighian tubules in concentrations of less than 10(-9) M and increase the frequency of hindgut contractions at concentrations above 10(-8) M. This Aedes aegypti (Yellowfever mosquito) protein is Leucokinins.